Here is a 190-residue protein sequence, read N- to C-terminus: Dual specificity protein phosphatase 21 (190 aa).

The 142-residue stretch at 21 to 162 (SFSQITRSLF…LINYEFKLFN (142 aa)) folds into the Tyrosine-protein phosphatase domain. A sufficient for mitochondrial localization region spans residues 43-128 (LSSNRITAIV…AYLMKYHSMS (86 aa)). Residue C106 is the Phosphocysteine intermediate of the active site.

This sequence belongs to the protein-tyrosine phosphatase family. Non-receptor class dual specificity subfamily. As to quaternary structure, microtubule inner protein component of sperm flagellar doublet microtubules. As to expression, expressed in testis.

It localises to the cytoplasm. It is found in the nucleus. Its subcellular location is the mitochondrion inner membrane. The protein localises to the cytoskeleton. The protein resides in the flagellum axoneme. It catalyses the reaction O-phospho-L-tyrosyl-[protein] + H2O = L-tyrosyl-[protein] + phosphate. It carries out the reaction O-phospho-L-seryl-[protein] + H2O = L-seryl-[protein] + phosphate. The enzyme catalyses O-phospho-L-threonyl-[protein] + H2O = L-threonyl-[protein] + phosphate. Functionally, protein phosphatase component of the sperm flagellar doublet microtubules. May act as a regulator of sperm motility by mediating dephosphorylation of sperm doublet microtubule proteins. Can dephosphorylate single and diphosphorylated synthetic MAPK peptides, with preference for the phosphotyrosine and diphosphorylated forms over phosphothreonine. This is Dual specificity protein phosphatase 21 (DUSP21) from Homo sapiens (Human).